Consider the following 585-residue polypeptide: MDRVESEEPMDGFESPVFSENTSSNSGWCSDAFSDSYIAYNPALLLKNDLLFSELLFASHLINVPRAIENNVTYEASSAVGVDNEMTSSTTEFIEEIGDVLALDRACLVCRTLDLYKRKFGLTPEWVADYAMLCMKSLASPPCAVVTFSAAFEFVYLMDRYYLCRYNVTLVGSFARRTLSLLDIQRHFFLHVCFRTDGGLPGIRPPPGKEMANKVRYSNYSFFVQAVVRAALLSISTSRLDETETRKSFYFNQDGLTGGPQPLAAALANWKDCARMVDCSSSEHRTSGMITCAERALKEDIEFEDILIDKLKKSSYVEAAWGYADLALLLLSGVATWNVDERTNCAIETRVGCVKSYWQANRIENSRDVPKQFSKFTSEDACPEVAFGPILLTTLKNAKCRGRTNTECMLCCLLTIGHYWIALRQFKRDILAYSANNTSLFDCIEPVINAWSLDNPIKLKFPFNDEGRFITIVKAAGSEAVYKHLFCDLLCALSELQTNPKILFAHPTTADKEVLELYKAQLAAQNRFEGRVCAGLWTLAYAFKAYQIFPRKPTANAAFIRDGGLMLRRHAISLVSLEHTLSKYV.

Residues 1 to 25 (MDRVESEEPMDGFESPVFSENTSSN) are disordered. Cysteine 107, cysteine 110, histidine 187, cysteine 193, cysteine 408, cysteine 411, histidine 484, and cysteine 491 together coordinate Zn(2+). 2 zinc finger regions span residues 107-193 (CLVC…LHVC) and 408-491 (CMLC…DLLC).

Belongs to the herpesviridae UL32 protein family.

The protein resides in the host cytoplasm. The protein localises to the host nucleus. Its function is as follows. Plays a role in efficient localization of neo-synthesized capsids to nuclear replication compartments, thereby controlling cleavage and packaging of virus genomic DNA. This chain is Packaging protein UL32 (26), found in Varicella-zoster virus (strain Dumas) (HHV-3).